We begin with the raw amino-acid sequence, 93 residues long: Small ribosomal subunit protein uS19 (93 aa).

This sequence belongs to the universal ribosomal protein uS19 family.

Functionally, protein S19 forms a complex with S13 that binds strongly to the 16S ribosomal RNA. This chain is Small ribosomal subunit protein uS19, found in Oenococcus oeni (strain ATCC BAA-331 / PSU-1).